We begin with the raw amino-acid sequence, 392 residues long: Chalcone synthase-like protein 1 (392 aa).

Residue C166 is part of the active site.

The protein belongs to the thiolase-like superfamily. Chalcone/stilbene synthases family. In terms of tissue distribution, expressed at the same level in leaves and in glandular trichomes.

Its subcellular location is the cytoplasm. Its function is as follows. Chalcone synthase that may use malonyl-CoA and hexanoyl-CoA as substrates but without producing olivetol or olivetolic acid. In Cannabis sativa (Hemp), this protein is Chalcone synthase-like protein 1 (CAN383).